A 79-amino-acid polypeptide reads, in one-letter code: Sulfur carrier protein TusA (79 aa).

C16 serves as the catalytic Cysteine persulfide intermediate.

Belongs to the sulfur carrier protein TusA family.

It localises to the cytoplasm. Its function is as follows. Sulfur carrier protein which probably makes part of a sulfur-relay system. The chain is Sulfur carrier protein TusA from Pseudomonas aeruginosa (strain LESB58).